The chain runs to 494 residues: Inosine-5'-monophosphate dehydrogenase (494 aa).

CBS domains follow at residues 93–154 (IIRN…DEKI) and 158–217 (MTTN…CKDS). Residues D251 and 301–303 (GIG) contribute to the NAD(+) site. The K(+) site is built by G303 and G305. Position 306 (S306) interacts with IMP. C308 serves as a coordination point for K(+). The Thioimidate intermediate role is filled by C308. IMP contacts are provided by residues 341–343 (DGG), 364–365 (GS), and 388–392 (YRGMG). R406 acts as the Proton acceptor in catalysis. Residue E421 participates in IMP binding. K(+) contacts are provided by E475, S476, and H477.

The protein belongs to the IMPDH/GMPR family. As to quaternary structure, homotetramer. It depends on K(+) as a cofactor.

The catalysed reaction is IMP + NAD(+) + H2O = XMP + NADH + H(+). It participates in purine metabolism; XMP biosynthesis via de novo pathway; XMP from IMP: step 1/1. With respect to regulation, mycophenolic acid (MPA) is a non-competitive inhibitor that prevents formation of the closed enzyme conformation by binding to the same site as the amobile flap. In contrast, mizoribine monophosphate (MZP) is a competitive inhibitor that induces the closed conformation. MPA is a potent inhibitor of mammalian IMPDHs but a poor inhibitor of the bacterial enzymes. MZP is a more potent inhibitor of bacterial IMPDH. Catalyzes the conversion of inosine 5'-phosphate (IMP) to xanthosine 5'-phosphate (XMP), the first committed and rate-limiting step in the de novo synthesis of guanine nucleotides, and therefore plays an important role in the regulation of cell growth. This Chlorobaculum tepidum (strain ATCC 49652 / DSM 12025 / NBRC 103806 / TLS) (Chlorobium tepidum) protein is Inosine-5'-monophosphate dehydrogenase.